We begin with the raw amino-acid sequence, 160 residues long: Endoribonuclease YbeY (160 aa).

Residues His-125, His-129, and His-135 each coordinate Zn(2+).

The protein belongs to the endoribonuclease YbeY family. Zn(2+) is required as a cofactor.

The protein resides in the cytoplasm. Single strand-specific metallo-endoribonuclease involved in late-stage 70S ribosome quality control and in maturation of the 3' terminus of the 16S rRNA. This is Endoribonuclease YbeY from Leuconostoc mesenteroides subsp. mesenteroides (strain ATCC 8293 / DSM 20343 / BCRC 11652 / CCM 1803 / JCM 6124 / NCDO 523 / NBRC 100496 / NCIMB 8023 / NCTC 12954 / NRRL B-1118 / 37Y).